The sequence spans 388 residues: Putative nickel insertion protein (388 aa).

Belongs to the LarC family.

The sequence is that of Putative nickel insertion protein from Syntrophobacter fumaroxidans (strain DSM 10017 / MPOB).